A 90-amino-acid polypeptide reads, in one-letter code: Small ribosomal subunit protein uS15c (90 aa).

The protein belongs to the universal ribosomal protein uS15 family. As to quaternary structure, part of the 30S ribosomal subunit.

The protein localises to the plastid. The protein resides in the chloroplast. The chain is Small ribosomal subunit protein uS15c (rps15) from Citrus sinensis (Sweet orange).